Reading from the N-terminus, the 366-residue chain is Phospho-N-acetylmuramoyl-pentapeptide-transferase (366 aa).

A run of 10 helical transmembrane segments spans residues 3 to 23 (QIFIAGAVAFLVSVFLTPVLI), 54 to 74 (GIAVLAGIVFGYLIAVLVGLV), 80 to 100 (PGVSGWLVLGLTLALGGLGFA), 120 to 140 (LVGQLVTAIVFGLLILQFPNA), 161 to 181 (IAIGPAIVGMILFLIFIYLVI), 197 to 217 (LASGVTAIVMGTYVLITFWQF), 238 to 258 (LSMLASAGLGACLGFLWWNAA), 262 to 282 (IFMGDTGSLALGGLVAGLSVT), 288 to 308 (LMILVGIIFVIEAASVVIQVV), and 341 to 361 (FWLLAALAAMSGFAVFYAEWL).

Belongs to the glycosyltransferase 4 family. MraY subfamily. The cofactor is Mg(2+).

It localises to the cell membrane. The enzyme catalyses UDP-N-acetyl-alpha-D-muramoyl-L-alanyl-gamma-D-glutamyl-meso-2,6-diaminopimeloyl-D-alanyl-D-alanine + di-trans,octa-cis-undecaprenyl phosphate = di-trans,octa-cis-undecaprenyl diphospho-N-acetyl-alpha-D-muramoyl-L-alanyl-D-glutamyl-meso-2,6-diaminopimeloyl-D-alanyl-D-alanine + UMP. Its pathway is cell wall biogenesis; peptidoglycan biosynthesis. Its function is as follows. Catalyzes the initial step of the lipid cycle reactions in the biosynthesis of the cell wall peptidoglycan: transfers peptidoglycan precursor phospho-MurNAc-pentapeptide from UDP-MurNAc-pentapeptide onto the lipid carrier undecaprenyl phosphate, yielding undecaprenyl-pyrophosphoryl-MurNAc-pentapeptide, known as lipid I. This is Phospho-N-acetylmuramoyl-pentapeptide-transferase from Corynebacterium jeikeium (strain K411).